The chain runs to 168 residues: Cell division inhibitor SulA (168 aa).

The tract at residues 106–112 is ftsZ binding; sequence ALLTGNY. The interval 161–168 is lon protease binding; the sequence is KIHSYLYH.

Belongs to the SulA family. Interacts with FtsZ. In terms of processing, is rapidly cleaved and degraded by the Lon protease once DNA damage is repaired.

In terms of biological role, component of the SOS system and an inhibitor of cell division. Accumulation of SulA causes rapid cessation of cell division and the appearance of long, non-septate filaments. In the presence of GTP, binds a polymerization-competent form of FtsZ in a 1:1 ratio, thus inhibiting FtsZ polymerization and therefore preventing it from participating in the assembly of the Z ring. This mechanism prevents the premature segregation of damaged DNA to daughter cells during cell division. The sequence is that of Cell division inhibitor SulA from Yersinia pestis bv. Antiqua (strain Antiqua).